The primary structure comprises 444 residues: Cholecystokinin receptor type A (444 aa).

The Extracellular portion of the chain corresponds to 1–56 (MSHSPARQHLVESSRMDVVDSLLMNGSNITPPCELGLENETLFCLDQPQPSKEWQS). Residues asparagine 25 and asparagine 39 are each glycosylated (N-linked (GlcNAc...) asparagine). A disulfide bridge links cysteine 33 with cysteine 44. Residues 57–82 (ALQILLYSIIFLLSVLGNTLVITVLI) traverse the membrane as a helical segment. Residues 83-92 (RNKRMRTVTN) are Cytoplasmic-facing. The chain crosses the membrane as a helical span at residues 93-119 (IFLLSLAVSDLMLCLFCMPFNLIPNLL). The Extracellular portion of the chain corresponds to 120–130 (KDFIFGSAVCK). Cysteine 129 and cysteine 211 are oxidised to a cystine. A helical transmembrane segment spans residues 131 to 152 (TTTYFMGTSVSVSTFNLVAISL). Residues 153–172 (ERYGAICRPLQSRVWQTKSH) are Cytoplasmic-facing. The chain crosses the membrane as a helical span at residues 173–193 (ALKVIAATWCLSFTIMTPYPI). Residues 194-225 (YSNLVPFTKNNNQTANMCRFLLPSDAMQQSWQ) lie on the Extracellular side of the membrane. Residue asparagine 205 is glycosylated (N-linked (GlcNAc...) asparagine). Residues 226-249 (TFLLLILFLLPGIVMVVAYGLISL) form a helical membrane-spanning segment. Topologically, residues 250–329 (ELYQGIKFDA…NLIAKKRVIR (80 aa)) are cytoplasmic. The disordered stretch occupies residues 263-288 (KSAKEKKPSTGSSTRYEDSDGCYLQK). A helical membrane pass occupies residues 330–350 (MLIVIVVLFFLCWMPIFSANA). Residues 351-365 (WRAYDTVSAEKHLSG) lie on the Extracellular side of the membrane. Residues 366–389 (TPISFILLLSYTSSCVNPIIYCFM) traverse the membrane as a helical segment. Topologically, residues 390–444 (NKRFRLGFMATFPCCPNPGPPGVRGEVGEEEDGRTIRALLSRYSYSHMSTSAPPP) are cytoplasmic. Residue cysteine 403 is the site of S-palmitoyl cysteine attachment.

The protein belongs to the G-protein coupled receptor 1 family. As to expression, pancreas and brain. Also expressed in the gastrointestinal system and vagus nerve.

It localises to the cell membrane. Receptor for cholecystokinin. Mediates pancreatic growth and enzyme secretion, smooth muscle contraction of the gall bladder and stomach. Has a 1000-fold higher affinity for CCK rather than for gastrin. It modulates feeding and dopamine-induced behavior in the central and peripheral nervous system. This receptor mediates its action by association with G proteins that activate a phosphatidylinositol-calcium second messenger system. The chain is Cholecystokinin receptor type A (Cckar) from Rattus norvegicus (Rat).